We begin with the raw amino-acid sequence, 88 residues long: YcgL domain-containing protein NTHI1684 (88 aa).

The YcgL domain maps to Met1–Ser85.

In Haemophilus influenzae (strain 86-028NP), this protein is YcgL domain-containing protein NTHI1684.